The primary structure comprises 351 residues: MKNKKLLVMAGGTGGHVFPAIAVAQTLQKQEWDICWLGTKDRMEAQLVPKYGIPIRFIQISGLRGKGIKALLNAPFAIFRAVLQAKKIIQEEKPDAVLGMGGYVSGPAGVAAKLCGVPIILHEQNAIAGLTNKLLGKIATCVLQAFPTAFPHAEVVGNPVREDLFEMPNPDIRFSDREEKLRVLVVGGSQGARVLNHTLPKVVTQLADKLEFRHQVGKGAVEEVSQLYGENLEQVKITEFIDNMAEAYAWADVVICRSGALTVCEIAAVGAAAIFVPFQHKDRQQYLNAKYLSDVGAAKIIEQADLTPEMLVNYLKNLTRENLLQMALKAKTMSMPNAAQRVAEVIKQYSN.

UDP-N-acetyl-alpha-D-glucosamine is bound by residues 13–15 (TGG), Asn-125, Arg-161, Ser-189, Ile-241, 260–265 (ALTVCE), and Gln-285.

Belongs to the glycosyltransferase 28 family. MurG subfamily.

It localises to the cell inner membrane. The catalysed reaction is di-trans,octa-cis-undecaprenyl diphospho-N-acetyl-alpha-D-muramoyl-L-alanyl-D-glutamyl-meso-2,6-diaminopimeloyl-D-alanyl-D-alanine + UDP-N-acetyl-alpha-D-glucosamine = di-trans,octa-cis-undecaprenyl diphospho-[N-acetyl-alpha-D-glucosaminyl-(1-&gt;4)]-N-acetyl-alpha-D-muramoyl-L-alanyl-D-glutamyl-meso-2,6-diaminopimeloyl-D-alanyl-D-alanine + UDP + H(+). The protein operates within cell wall biogenesis; peptidoglycan biosynthesis. In terms of biological role, cell wall formation. Catalyzes the transfer of a GlcNAc subunit on undecaprenyl-pyrophosphoryl-MurNAc-pentapeptide (lipid intermediate I) to form undecaprenyl-pyrophosphoryl-MurNAc-(pentapeptide)GlcNAc (lipid intermediate II). In Haemophilus influenzae (strain PittGG), this protein is UDP-N-acetylglucosamine--N-acetylmuramyl-(pentapeptide) pyrophosphoryl-undecaprenol N-acetylglucosamine transferase.